Here is a 488-residue protein sequence, read N- to C-terminus: DELTA-alicitoxin-Pse2b (488 aa).

Residues 1 to 21 (MSKPIIFLLTAFVVLTDLGAT) form the signal peptide. The region spanning 24-344 (TEKVEVKAKP…GYLNFDCAYE (321 aa)) is the MACPF domain. One can recognise an EGF-like domain in the interval 369 to 398 (VCKLGPEGCHSDDDCESDDLIYCACCGDSC). Disulfide bonds link C370–C383, C377–C391, and C393–C398.

It is found in the secreted. Its subcellular location is the nematocyst. Its function is as follows. Causes lethal toxicity to the shrimp Palaemon paucidence, and hemolytic activity toward sheep red blood cells. The polypeptide is DELTA-alicitoxin-Pse2b (Phyllodiscus semoni (Night anemone)).